The chain runs to 603 residues: Elongation factor 4 (603 aa).

Residues 7-191 (DNIRNFSIVA…AIVTRLPPPQ (185 aa)) enclose the tr-type G domain. Residues 19–24 (DHGKST) and 138–141 (NKVD) each bind GTP.

This sequence belongs to the TRAFAC class translation factor GTPase superfamily. Classic translation factor GTPase family. LepA subfamily.

It is found in the cell inner membrane. It catalyses the reaction GTP + H2O = GDP + phosphate + H(+). Required for accurate and efficient protein synthesis under certain stress conditions. May act as a fidelity factor of the translation reaction, by catalyzing a one-codon backward translocation of tRNAs on improperly translocated ribosomes. Back-translocation proceeds from a post-translocation (POST) complex to a pre-translocation (PRE) complex, thus giving elongation factor G a second chance to translocate the tRNAs correctly. Binds to ribosomes in a GTP-dependent manner. This is Elongation factor 4 from Rhodopseudomonas palustris (strain HaA2).